The sequence spans 405 residues: CRS2-associated factor 1, mitochondrial (405 aa).

The transit peptide at 1 to 20 (MFLIRLSRHNPSSFTLLTRR) directs the protein to the mitochondrion. The disordered stretch occupies residues 32–75 (RDLYNFQSPPPLSSSASENPDFNQKNNNKKKPKPQYRPPSSLEG). CRM domains lie at 157-255 (ASLT…KRPK) and 277-373 (DGLS…KEDD). Residues 384-405 (SIDSDVDLSCSRGAQDSPDETT) form a disordered region.

As to quaternary structure, part of large ribonucleo-protein complexes that include group IIB introns.

Its subcellular location is the mitochondrion. Its function is as follows. May be involved in the splicing of group IIB introns in mitochondria. The protein is CRS2-associated factor 1, mitochondrial of Arabidopsis thaliana (Mouse-ear cress).